A 295-amino-acid chain; its full sequence is Sulfotransferase 1 family member D1 (295 aa).

48–53 (KSGTTW) contacts 3'-phosphoadenylyl sulfate. Residues Phe81 and 106–108 (KTH) contribute to the substrate site. His108 acts as the Proton acceptor in catalysis. Arg130 and Ser138 together coordinate 3'-phosphoadenylyl sulfate. A substrate-binding site is contributed by Phe142. Residues Tyr193, 227-232 (SSFSVM), and 257-259 (RKG) contribute to the 3'-phosphoadenylyl sulfate site.

The protein belongs to the sulfotransferase 1 family. As to expression, detected in kidney and liver. Detected in kidney collecting duct cells.

The protein localises to the cytoplasm. Its function is as follows. Sulfotransferase with broad substrate specificity that utilizes 3'-phospho-5'-adenylyl sulfate (PAPS) as sulfonate donor to catalyze the sulfate conjugation of catecholamines, such as dopamine, prostaglandins, leukotriene E4, drugs and xenobiotic compounds. Has sulfotransferase activity towards p-nitrophenol, 2-naphthylamine and minoxidil (in vitro). Sulfonation increases the water solubility of most compounds, and therefore their renal excretion, but it can also result in bioactivation to form active metabolites. The polypeptide is Sulfotransferase 1 family member D1 (Sult1d1) (Mus musculus (Mouse)).